Reading from the N-terminus, the 2471-residue chain is Neurogenic locus notch homolog protein 2 (2471 aa).

The signal sequence occupies residues 1-25 (MPALRPALLWALLALWLCCAAPAHA). EGF-like domains are found at residues 26-63 (LQCRDGYEPCVNEGMCVTYHNGTGYCKCPEGFLGEYCQ), 64-102 (HRDPCEKNRCQNGGTCVAQAMLGKATCRCASGFTGEDCQ), 105-143 (TSHPCFVSRPCLNGGTCHMLSRDTYECTCQVGFTGKECQ), and 144-180 (WTDACLSHPCANGSTCTTVANQFSCKCLTGFTGQKCE). Residues 26 to 1677 (LQCRDGYEPC…SESLTPERTQ (1652 aa)) are Extracellular-facing. 84 disulfide bridges follow: cysteine 28–cysteine 41, cysteine 35–cysteine 51, cysteine 53–cysteine 62, cysteine 68–cysteine 79, cysteine 73–cysteine 90, cysteine 92–cysteine 101, cysteine 109–cysteine 121, cysteine 115–cysteine 131, cysteine 133–cysteine 142, cysteine 148–cysteine 159, cysteine 153–cysteine 168, cysteine 170–cysteine 179, cysteine 186–cysteine 198, cysteine 192–cysteine 207, cysteine 209–cysteine 218, cysteine 225–cysteine 236, cysteine 230–cysteine 246, cysteine 248–cysteine 257, cysteine 264–cysteine 275, cysteine 269–cysteine 284, cysteine 286–cysteine 295, cysteine 302–cysteine 315, cysteine 309–cysteine 324, cysteine 326–cysteine 335, cysteine 342–cysteine 353, cysteine 347–cysteine 362, cysteine 364–cysteine 373, cysteine 379–cysteine 390, cysteine 384–cysteine 401, cysteine 403–cysteine 412, cysteine 419–cysteine 433, cysteine 427–cysteine 442, cysteine 444–cysteine 453, cysteine 460–cysteine 471, cysteine 465–cysteine 480, cysteine 482–cysteine 491, cysteine 498–cysteine 509, cysteine 503–cysteine 518, cysteine 520–cysteine 529, cysteine 536–cysteine 547, cysteine 541–cysteine 556, cysteine 558–cysteine 567, cysteine 574–cysteine 584, cysteine 579–cysteine 593, cysteine 595–cysteine 604, cysteine 611–cysteine 622, cysteine 616–cysteine 631, cysteine 633–cysteine 642, cysteine 649–cysteine 659, cysteine 654–cysteine 668, cysteine 670–cysteine 679, cysteine 686–cysteine 697, cysteine 691–cysteine 706, cysteine 708–cysteine 717, cysteine 724–cysteine 734, cysteine 729–cysteine 743, cysteine 745–cysteine 754, cysteine 761–cysteine 772, cysteine 766–cysteine 781, cysteine 783–cysteine 792, cysteine 799–cysteine 810, cysteine 804–cysteine 819, cysteine 821–cysteine 830, cysteine 837–cysteine 848, cysteine 842–cysteine 859, cysteine 861–cysteine 870, cysteine 877–cysteine 888, cysteine 882–cysteine 897, cysteine 899–cysteine 908, cysteine 915–cysteine 926, cysteine 920–cysteine 935, cysteine 937–cysteine 946, cysteine 953–cysteine 964, cysteine 958–cysteine 973, cysteine 975–cysteine 984, cysteine 991–cysteine 1002, cysteine 996–cysteine 1011, cysteine 1013–cysteine 1022, cysteine 1029–cysteine 1040, cysteine 1034–cysteine 1049, cysteine 1051–cysteine 1060, cysteine 1067–cysteine 1078, cysteine 1072–cysteine 1087, and cysteine 1089–cysteine 1098. A glycan (N-linked (GlcNAc...) asparagine) is linked at asparagine 46. An N-linked (GlcNAc...) asparagine glycan is attached at asparagine 155. Residues 182–219 (DVNECDIPGHCQHGGTCLNLPGSYQCQCPQGFTGQYCD) form the EGF-like 5; calcium-binding domain. The EGF-like 6 domain occupies 221-258 (LYVPCAPSPCVNGGTCRQTGDFTFECNCLPGFEGSTCE). The EGF-like 7; calcium-binding domain occupies 260–296 (NIDDCPNHRCQNGGVCVDGVNTYNCRCPPQWTGQFCT). In terms of domain architecture, EGF-like 8; calcium-binding spans 298-336 (DVDECLLQPNACQNGGTCANRNGGYGCVCVNGWSGDDCS). Residues 338 to 374 (NIDDCAFASCTPGSTCIDRVASFSCMCPEGKAGLLCH) form the EGF-like 9; calcium-binding domain. Residues 375-413 (LDDACISNPCHKGALCDTNPLNGQYICTCPQGYKGADCT) enclose the EGF-like 10 domain. Positions 415-454 (DVDECAMANSNPCEHAGKCVNTDGAFHCECLKGYAGPRCE) constitute an EGF-like 11; calcium-binding domain. An EGF-like 12; calcium-binding domain is found at 456–492 (DINECHSDPCQNDATCLDKIGGFTCLCMPGFKGVHCE). The region spanning 494–530 (EINECQSNPCVNNGQCVDKVNRFQCLCPPGFTGPVCQ) is the EGF-like 13; calcium-binding domain. Residues 532–568 (DIDDCSSTPCLNGAKCIDHPNGYECQCATGFTGVLCE) form the EGF-like 14; calcium-binding domain. Residues 570–605 (NIDNCDPDPCHHGQCQDGIDSYTCICNPGYMGAICS) form the EGF-like 15; calcium-binding domain. Residues 607–643 (QIDECYSSPCLNDGRCIDLVNGYQCNCQPGTSGVNCE) enclose the EGF-like 16; calcium-binding domain. O-linked (Glc...) serine; alternate glycosylation occurs at serine 613. The O-linked (Xyl...) serine; alternate glycan is linked to serine 613. An EGF-like 17; calcium-binding domain is found at 645–680 (NFDDCASNPCIHGICMDGINRYSCVCSPGFTGQRCN). The EGF-like 18; calcium-binding domain maps to 682 to 718 (DIDECASNPCRKGATCINGVNGFRCICPEGPHHPSCY). The EGF-like 19 domain occupies 720-755 (QVNECLSNPCIHGNCTGGLSGYKCLCDAGWVGINCE). The N-linked (GlcNAc...) asparagine glycan is linked to asparagine 733. The EGF-like 20; calcium-binding domain occupies 757–793 (DKNECLSNPCQNGGTCDNLVNGYRCTCKKGFKGYNCQ). The 37-residue stretch at 795-831 (NIDECASNPCLNQGTCFDDISGYTCHCVLPYTGKNCQ) folds into the EGF-like 21; calcium-binding domain. The EGF-like 22 domain occupies 833–871 (VLAPCSPNPCENAAVCKESPNFESYTCLCAPGWQGQRCT). The EGF-like 23; calcium-binding domain maps to 873–909 (DIDECISKPCMNHGLCHNTQGSYMCECPPGFSGMDCE). Residues 911–947 (DIDDCLANPCQNGGSCMDGVNTFSCLCLPGFTGDKCQ) enclose the EGF-like 24; calcium-binding domain. Residues 949-985 (DMNECLSEPCKNGGTCSDYVNSYTCKCQAGFDGVHCE) enclose the EGF-like 25; calcium-binding domain. Residues 987-1023 (NINECTESSCFNGGTCVDGINSFSCLCPVGFTGSFCL) form the EGF-like 26; calcium-binding domain. One can recognise an EGF-like 27; calcium-binding domain in the interval 1025-1061 (EINECSSHPCLNEGTCVDGLGTYRCSCPLGYTGKNCQ). EGF-like domains follow at residues 1063–1099 (LVNLCSRSPCKNKGTCVQKKAESQCLCPSGWAGAYCD) and 1101–1147 (PNVS…SYCE). The N-linked (GlcNAc...) asparagine glycan is linked to asparagine 1102. 24 disulfides stabilise this stretch: cysteine 1105-cysteine 1126, cysteine 1120-cysteine 1135, cysteine 1137-cysteine 1146, cysteine 1153-cysteine 1164, cysteine 1158-cysteine 1173, cysteine 1175-cysteine 1184, cysteine 1191-cysteine 1202, cysteine 1196-cysteine 1211, cysteine 1213-cysteine 1222, cysteine 1229-cysteine 1241, cysteine 1235-cysteine 1250, cysteine 1252-cysteine 1261, cysteine 1268-cysteine 1281, cysteine 1273-cysteine 1290, cysteine 1292-cysteine 1301, cysteine 1308-cysteine 1319, cysteine 1313-cysteine 1331, cysteine 1333-cysteine 1342, cysteine 1378-cysteine 1389, cysteine 1383-cysteine 1400, cysteine 1402-cysteine 1411, cysteine 1425-cysteine 1448, cysteine 1430-cysteine 1443, and cysteine 1439-cysteine 1455. The 37-residue stretch at 1149 to 1185 (QLDECASNPCQHGATCSDFIGGYRCECVPGYQGVNCE) folds into the EGF-like 30; calcium-binding domain. One can recognise an EGF-like 31; calcium-binding domain in the interval 1187-1223 (EVDECQNQPCQNGGTCIDLVNHFKCSCPPGTRGLLCE). An EGF-like 32; calcium-binding domain is found at 1225 to 1262 (NIDDCARGPHCLNGGQCMDRIGGYSCRCLPGFAGERCE). EGF-like domains are found at residues 1264 to 1302 (DINECLSNPCSSEGSLDCIQLTNDYLCVCRSAFTGRHCE), 1304 to 1343 (FVDVCPQMPCLNGGTCAVASNMPDGFICRCPPGFSGARCQ), and 1374 to 1412 (CESGCASSPCQHGGSCHPQRQPPYYSCQCAPPFSGSRCE). 3 LNR repeats span residues 1425–1465 (CLSQ…PWAN), 1466–1502 (CSSPLPCWDYINNQCDELCNTVECLFDNFECQGNSKT), and 1503–1544 (CKYD…NLAE). The segment at 1425 to 1677 (CLSQYCADKA…SESLTPERTQ (253 aa)) is negative regulatory region (NRR). Asparagine 1465 is a glycosylation site (N-linked (GlcNAc...) asparagine). Cystine bridges form between cysteine 1466–cysteine 1489, cysteine 1472–cysteine 1484, cysteine 1480–cysteine 1496, cysteine 1503–cysteine 1527, cysteine 1509–cysteine 1522, cysteine 1518–cysteine 1534, and cysteine 1632–cysteine 1639. The chain crosses the membrane as a helical span at residues 1678–1698 (LLYLLAVAVVIILFIILLGVI). The Cytoplasmic portion of the chain corresponds to 1699–2471 (MAKRKRKHGS…PPHNNMQVYA (773 aa)). Phosphothreonine is present on threonine 1716. The segment at 1754 to 1788 (TSEHWVDDEGPQPKKVKAEDEALLSEEDDPIDRRP) is disordered. The span at 1774–1783 (EALLSEEDDP) shows a compositional bias: acidic residues. Serine 1778 bears the Phosphoserine mark. Threonine 1802 is subject to Phosphothreonine. Residue serine 1804 is modified to Phosphoserine. Threonine 1808 is modified (phosphothreonine). ANK repeat units lie at residues 1827–1871 (DGCT…SLQA), 1876–1905 (TGEMALHLAARYSRADAAKRLLDAGADANA), 1909–1939 (MGRCPLHAAVAADAQGVFQILIRNRVTDLDA), 1943–1972 (DGTTPLILAARLAVEGMVAELINCQADVNA), 1976–2005 (HGKSALHWAAAVNNVEATLLLLKNGANRDM), and 2009–2038 (KEETPLFLAAREGSYEAAKILLDHFANRDI). A phosphoserine mark is found at serine 1842 and serine 1845. Phosphoserine is present on residues serine 2070, serine 2078, and serine 2081. Disordered stretches follow at residues 2091 to 2168 (FLSL…TSSP) and 2380 to 2471 (VGKY…QVYA). Threonine 2097 carries the phosphothreonine modification. Residues 2098-2107 (PMGKKSRRPS) are compositionally biased toward basic residues. Composition is skewed to polar residues over residues 2108–2117 (AKSTMPTSLP), 2137–2150 (EKVQLSESSVTLSP), 2159–2168 (TYVSDTTSSP), and 2388–2406 (SQHSYASSNAAERTPSHSG). A compositionally biased stretch (low complexity) spans 2417 to 2445 (PSPESPDQWSSSSPHSASDWSDVTTSPTP).

It belongs to the NOTCH family. As to quaternary structure, heterodimer of a C-terminal fragment N(TM) and an N-terminal fragment N(EC) which are probably linked by disulfide bonds. Interacts with MAML1, MAML2 and MAML3 which act as transcriptional coactivators for NOTCH2. Interacts with RELA/p65. Interacts with HIF1AN. Interacts (via ANK repeats) with TCIM, the interaction inhibits the nuclear translocation of NOTCH2 N2ICD. Interacts with CUL1, RBX1, SKP1 and FBXW7 that are SCF(FBXW7) E3 ubiquitin-protein ligase complex components. Interacts with MINAR1; this interaction increases MINAR1 stability and function. Interacts with NOTCH2NL (NOTCH2NLA, NOTCH2NLB and/or NOTCH2NLC); leading to enhance Notch signaling pathway in a non-cell-autonomous manner. Interacts with MDK; this interaction mediates a nuclear accumulation of NOTCH2 and therefore activation of NOTCH2 signaling leading to interaction between HES1 and STAT3. Interacts with MINAR2. In terms of processing, synthesized in the endoplasmic reticulum as an inactive form which is proteolytically cleaved by a furin-like convertase in the trans-Golgi network before it reaches the plasma membrane to yield an active, ligand-accessible form. Cleavage results in a C-terminal fragment N(TM) and a N-terminal fragment N(EC). Following ligand binding, it is cleaved by TNF-alpha converting enzyme (TACE) to yield a membrane-associated intermediate fragment called notch extracellular truncation (NEXT). This fragment is then cleaved by presenilin dependent gamma-secretase to release a notch-derived peptide containing the intracellular domain (NICD) from the membrane. Post-translationally, hydroxylated by HIF1AN. Can be either O-glucosylated or O-xylosylated at Ser-613 by POGLUT1. In terms of processing, phosphorylated by GSK3. GSK3-mediated phosphorylation is necessary for NOTCH2 recognition by FBXW7, ubiquitination and degradation via the ubiquitin proteasome pathway. In terms of tissue distribution, expressed in the brain, heart, kidney, lung, skeletal muscle and liver. Ubiquitously expressed in the embryo.

The protein localises to the cell membrane. It is found in the nucleus. Its subcellular location is the cytoplasm. Its function is as follows. Functions as a receptor for membrane-bound ligands Jagged-1 (JAG1), Jagged-2 (JAG2) and Delta-1 (DLL1) to regulate cell-fate determination. Upon ligand activation through the released notch intracellular domain (NICD) it forms a transcriptional activator complex with RBPJ/RBPSUH and activates genes of the enhancer of split locus. Affects the implementation of differentiation, proliferation and apoptotic programs. Involved in bone remodeling and homeostasis. In collaboration with RELA/p65 enhances NFATc1 promoter activity and positively regulates RANKL-induced osteoclast differentiation. Positively regulates self-renewal of liver cancer cells. The protein is Neurogenic locus notch homolog protein 2 of Homo sapiens (Human).